The sequence spans 695 residues: Elongation factor G 1 (695 aa).

In terms of domain architecture, tr-type G spans 6-282 (STFRNIGISA…AITYYLPDPT (277 aa)). GTP contacts are provided by residues 15-22 (AHIDSGKT), 82-86 (DTPGH), and 136-139 (NKCD).

This sequence belongs to the TRAFAC class translation factor GTPase superfamily. Classic translation factor GTPase family. EF-G/EF-2 subfamily.

It localises to the cytoplasm. Catalyzes the GTP-dependent ribosomal translocation step during translation elongation. During this step, the ribosome changes from the pre-translocational (PRE) to the post-translocational (POST) state as the newly formed A-site-bound peptidyl-tRNA and P-site-bound deacylated tRNA move to the P and E sites, respectively. Catalyzes the coordinated movement of the two tRNA molecules, the mRNA and conformational changes in the ribosome. This Treponema pallidum (strain Nichols) protein is Elongation factor G 1 (fusA).